The following is a 759-amino-acid chain: Protein zyg-11 homolog A (759 aa).

3 LRR repeats span residues 204–227 (LPRLESLDISNTLVTDISALLTCK), 235–260 (MHYLKCLAMTKSQILAVIRELKCLLH), and 490–513 (VTSILALQLSPEQTAQLEELFMAV).

Belongs to the zyg-11 family.

In terms of biological role, probably acts as a target recruitment subunit in an E3 ubiquitin ligase complex ZYGA-CUL2-elongin BC. This Homo sapiens (Human) protein is Protein zyg-11 homolog A (ZYG11A).